A 449-amino-acid chain; its full sequence is MRSKTFSVLSSCLLLIATVQGQLSGSVGPSTSISDKKAVKTCNVLDYGATNDNKTDVGQPIMDAFEDCGSGGVIYIPDGDYLIQEWVSLENGTAFAIQLDGVIYRNGTTTSQGYMFGISGGSDFELYSSTSKGAIQGSGYLYHMNGEFTAPRLLHISDVSHWSVHDIALVDAPMFHFVIDDASNGEVYNMAIRGGNSGGLDGIDVSGDNIWIHDVMVTNKDECVTVKTGSHNFQIENIYCNWSGGCAMGSLGSGTNVSNIVYRNIYTWNSNQMYMIKSNGGDGEVSNLLFENFIGHGNAYSLDLDSEWSSMDTVDGDGIFYRNITFKNWKGTETDGESRPSIRVICPEATPCTDITIEDVDLWTEEGDSETYVCKNAFGSGACLKSDSSSTATYATTTTVTSAPSGYSATTMAADLTSAFGTDASIPIPTIPTSFYPGATPYSALAGSS.

An N-terminal signal peptide occupies residues Met1–Gly21. Cys42 and Cys68 are oxidised to a cystine. Asn53, Asn91, and Asn106 each carry an N-linked (GlcNAc...) asparagine glycan. Asp221 acts as the Proton donor in catalysis. Cys223 and Cys240 are joined by a disulfide. 2 N-linked (GlcNAc...) asparagine glycosylation sites follow: Asn241 and Asn256. His296 is a catalytic residue. Asn323 carries an N-linked (GlcNAc...) asparagine glycan. Disulfide bonds link Cys346-Cys352 and Cys374-Cys383.

The protein belongs to the glycosyl hydrolase 28 family.

It is found in the secreted. The catalysed reaction is Endohydrolysis of alpha-D-GalA-(1-&gt;2)-alpha-L-Rha glycosidic bond in the rhamnogalacturonan I backbone with initial inversion of anomeric configuration releasing oligosaccharides with beta-D-GalA at the reducing end.. Functionally, pectinolytic enzymes consist of four classes of enzymes: pectine lyase, polygalacturonase, pectin methylesterase and rhamnogalacturonase. Hydrolyzes alpha-D-galacturonopyranosyl-(1,2)-alpha-L-rhamnopyranosyl linkages in the backbone of the hairy regions of pectins. This chain is Probable rhamnogalacturonase E (rhgE), found in Aspergillus flavus (strain ATCC 200026 / FGSC A1120 / IAM 13836 / NRRL 3357 / JCM 12722 / SRRC 167).